A 107-amino-acid polypeptide reads, in one-letter code: UPF0060 membrane protein glr4174 (107 aa).

A run of 4 helical transmembrane segments spans residues 1-21 (MALL…FAFW), 26-46 (LGKN…FAWL), 58-78 (AYAA…WLVE), and 87-107 (LAGA…DRSP).

Belongs to the UPF0060 family.

The protein resides in the cell inner membrane. The protein is UPF0060 membrane protein glr4174 of Gloeobacter violaceus (strain ATCC 29082 / PCC 7421).